Reading from the N-terminus, the 347-residue chain is Tryptophan--tRNA ligase (347 aa).

ATP contacts are provided by residues 10–12 and 18–19; these read QAS and GN. The 'HIGH' region motif lies at 11–19; sequence ASGRQHLGN. An L-tryptophan-binding site is contributed by aspartate 140. Residues 152 to 154, isoleucine 191, and 200 to 204 contribute to the ATP site; these read GND and KMSKS. The 'KMSKS' region signature appears at 200 to 204; sequence KMSKS.

It belongs to the class-I aminoacyl-tRNA synthetase family. In terms of assembly, homodimer.

The protein localises to the cytoplasm. It carries out the reaction tRNA(Trp) + L-tryptophan + ATP = L-tryptophyl-tRNA(Trp) + AMP + diphosphate + H(+). In terms of biological role, catalyzes the attachment of tryptophan to tRNA(Trp). The chain is Tryptophan--tRNA ligase from Mycoplasma genitalium (strain ATCC 33530 / DSM 19775 / NCTC 10195 / G37) (Mycoplasmoides genitalium).